A 195-amino-acid chain; its full sequence is Interferon tau (195 aa).

The N-terminal stretch at 1 to 23 (MAFMLSLLMALVLVSYGLGGSLG) is a signal peptide. Intrachain disulfides connect Cys-52–Cys-162 and Cys-87–Cys-109.

This sequence belongs to the alpha/beta interferon family. IFN-alphaII subfamily.

Its subcellular location is the secreted. Paracrine hormone primarily responsible for maternal recognition of pregnancy. Interacts with endometrial receptors, probably type I interferon receptors, and blocks estrogen receptor expression, preventing the estrogen-induced increase in oxytocin receptor expression in the endometrium. This results in the suppression of the pulsatile endometrial release of the luteolytic hormone prostaglandin F2-alpha, hindering the regression of the corpus luteum (luteolysis) and therefore a return to ovarian cyclicity. This, and a possible direct effect of IFN-tau on prostaglandin synthesis, leads in turn to continued ovarian progesterone secretion, which stimulates the secretion by the endometrium of the nutrients required for the growth of the conceptus. In summary, displays particularly high antiviral and antiproliferative potency concurrently with particular weak cytotoxicity, high antiluteolytic activity and immunomodulatory properties. In contrast with other IFNs, IFN-tau is not virally inducible. This chain is Interferon tau (IFNT), found in Giraffa camelopardalis (Giraffe).